The following is a 226-amino-acid chain: uncharacterized protein (226 aa).

Positions 18–219 (LTIRNYTETD…YGVLMEWKNV (202 aa)) constitute an N-acetyltransferase domain.

It belongs to the acetyltransferase family.

This is an uncharacterized protein from Bacillus subtilis (strain 168).